The following is a 66-amino-acid chain: Putative alpha-neurotoxin RjAa16 (66 aa).

The 60-residue stretch at 1 to 60 (KEGYPVDWGNCKYECMSDAYCKDLCVDRKAKSGYCYKLNWFCYCEGLPDDSPIKTNGHCR) folds into the LCN-type CS-alpha/beta domain. 4 cysteine pairs are disulfide-bonded: Cys11–Cys59, Cys15–Cys35, Cys21–Cys42, and Cys25–Cys44.

This sequence belongs to the long (4 C-C) scorpion toxin superfamily. Sodium channel inhibitor family. Alpha subfamily. As to expression, expressed by the venom gland.

The protein resides in the secreted. Functionally, alpha toxins bind voltage-independently at site-3 of sodium channels (Nav) and inhibits the inactivation of the activated channels, thereby blocking neuronal transmission. This is Putative alpha-neurotoxin RjAa16 from Rhopalurus junceus (Caribbean blue scorpion).